The following is a 145-amino-acid chain: uncharacterized protein (145 aa).

An N-terminal signal peptide occupies residues 1–20; that stretch reads MPSKVCTLILLFSVINQMKC.

This is an uncharacterized protein from Caenorhabditis elegans.